A 400-amino-acid polypeptide reads, in one-letter code: MQSLLLALLLLPVCSPGGASNLHEDLTLLRTDLALRLYRSVAAAGNQTNLVLSPAGAFIPLELLQFGARGNTGRQLAQALGYTVHDPKVREWLQTVYAVLPSTNPGAKLELACTLYVQTGTPLAPCFVEQVSRWANSSLELANFREPNSTAMLANGWGPRQTAGDEPVGSAWERGGGAESAQLVLVSTVSFQSAWRHQFSSDTQLLPFTCAQGLTLEVPMMYQMAEVNFGQFQDPAGHQVGVLELPYLGNVASLLLVLPRDRDTPLSHIEPHLTASLLHAWTASLKRARMEVFLPRFRIQNHFDLKNILYSWGVIDLFDPLRANLKGISGQDGFYVSEAIHKAKIEVSEEGTKASAATALLLLKRSRIPIFKADRPFIFFLREPNTAFVFSIGRVLNPLH.

An N-terminal signal peptide occupies residues 1 to 19; it reads MQSLLLALLLLPVCSPGGA. N-linked (GlcNAc...) asparagine glycosylation is present at Asn46.

This sequence belongs to the serpin family.

The protein resides in the secreted. In terms of biological role, probable serine protease inhibitor. The sequence is that of Serpin E3 (SERPINE3) from Bos taurus (Bovine).